Here is a 367-residue protein sequence, read N- to C-terminus: MSVFTNSYIPVNKYTRPGLKLQGVKKCVLHYTANPGAGADNHRRYFSNAQVYASAHIFVDKAEAICIIPLNEVAYHANDIQQRDSAGNPYRGVAALKPNANFLSIGVEMCLEKDGSFHSDTVERTEDVFVELCNKFGLDPIDDIVRHYDITHKNCPAPWVSNSQKFVDFKNRVKAKMSGKSVSKASPTKPTTSSPSSSSAVSGSLKSKVDGLRFYSKPSWEDKDVVGTVNKGIGFPTVVEKVKVGSAYQYKVKNSKGTTYYITASDKYVDVTGSVKTSSSAPKTTSTSSSSSSIKSVGKIKIVGVSSAAIVMDKPDRNSSKNIGTVKLGSTISISGSVKGKNNSNGYWEVIYKGKRGYISGQFGSTI.

The N-acetylmuramoyl-L-alanine amidase domain maps to 24 to 158 (VKKCVLHYTA…DITHKNCPAP (135 aa)). The interval 178–204 (SGKSVSKASPTKPTTSSPSSSSAVSGS) is disordered. A compositionally biased stretch (low complexity) spans 180–204 (KSVSKASPTKPTTSSPSSSSAVSGS). 2 SH3b domains span residues 202-271 (SGSL…YVDV) and 298-367 (GKIK…GSTI).

It belongs to the N-acetylmuramoyl-L-alanine amidase 2 family.

The protein resides in the secreted. It carries out the reaction Hydrolyzes the link between N-acetylmuramoyl residues and L-amino acid residues in certain cell-wall glycopeptides.. Its function is as follows. Autolysins are involved in some important biological processes such as cell separation, cell-wall turnover, competence for genetic transformation, formation of the flagella and sporulation. Involved in prophage SP-beta-mediated cell lysis. The sequence is that of N-acetylmuramoyl-L-alanine amidase BlyA (blyA) from Bacillus subtilis (strain 168).